We begin with the raw amino-acid sequence, 222 residues long: MCLRLGGLSVGDFRKVLMKTGLVLVVLGHVSFIAAALLHGTVLRYVAAPNDAVALQYCVVDILSVTSAIVVITSGISVIVLSRYLPSIPLRWTVFSSSVACALLSLTCALGLLASIAMTFATQGRALLAACTFGGPERLALAPDCPFDPTRIYSSSLCLWGISLLFCVAESVFAVRSAQLAYQVLELRPWLGKSSHRMMQESPEPVEDPDLPSRTSSGPMTL.

4 helical membrane-spanning segments follow: residues Leu-22 to Val-42, Ile-62 to Ser-82, Ala-100 to Phe-120, and Ser-155 to Val-175. The tract at residues Met-198–Leu-222 is disordered. A compositionally biased stretch (polar residues) spans Ser-213–Leu-222.

Belongs to the TMEM54 family.

Its subcellular location is the membrane. The sequence is that of Transmembrane protein 54 (TMEM54) from Bos taurus (Bovine).